A 200-amino-acid chain; its full sequence is uncharacterized protein (200 aa).

The disordered stretch occupies residues 149–200; that stretch reads APDPGGSVATEEVLRSDDRDSHTQDSASEWPEGNDSVGSAAMRIDLSRIGGT. The segment covering 160–171 has biased composition (basic and acidic residues); it reads EVLRSDDRDSHT.

It to A.tumefaciens Ti plasmid conjugal transfer region I ORFR2 and ORFR3.

This is an uncharacterized protein from Sinorhizobium fredii (strain NBRC 101917 / NGR234).